The following is a 772-amino-acid chain: Rho guanine nucleotide exchange factor 6 (772 aa).

One can recognise a Calponin-homology (CH) domain in the interval 1–111; it reads MNPEERVVTW…TLLAVNKATE (111 aa). The segment at 115–158 is disordered; that stretch reads SERPCGRSSSLSATTSSQTNPQAAVPSTTPEQQSEEKAAEMTEN. Over residues 122–133 the composition is skewed to low complexity; it reads SSSLSATTSSQT. The residue at position 126 (Ser-126) is a Phosphoserine. Thr-133 is subject to Phosphothreonine. Positions 134-146 are enriched in polar residues; sequence NPQAAVPSTTPEQ. The SH3 domain occupies 160 to 219; it reads SHQLIVKARFNFKQTNEDELSVCKGDIIYVTRVEEGGWWEGTLNGRTGWFPSNYVREIKP. Position 225 is a phosphoserine (Ser-225). A DH domain is found at 241 to 421; that stretch reads YYTVVLQNIL…KSLMGQCQDL (181 aa). Residues 443 to 548 form the PH domain; it reads DIKTLGNVIF…WMEQLNRLTK (106 aa). Position 488 is a phosphoserine (Ser-488). The segment covering 557–573 has biased composition (low complexity); it reads SKTSSSSCSTHSSFSST. Residues 557–581 form a disordered region; that stretch reads SKTSSSSCSTHSSFSSTGQPRGPLE. Phosphoserine is present on residues Ser-640 and Ser-680.

As to quaternary structure, interacts with PAK kinases through the SH3 domain. Interacts with GIT1. Interacts with PARVB. Component of cytoplasmic complexes, which also contain PXN, GIT1 and PAK1. Interacts with BIN2. Identified in a complex with BIN2 and GIT2. Interacts with PARVG; the guanine nucleotide exchange factor activity of ARHGEF6 is essential for PARVG-induced enhancement of cell spreading.

It is found in the cell projection. It localises to the lamellipodium. Its function is as follows. Acts as a RAC1 guanine nucleotide exchange factor (GEF). This chain is Rho guanine nucleotide exchange factor 6 (Arhgef6), found in Rattus norvegicus (Rat).